Consider the following 393-residue polypeptide: Branched-chain-amino-acid aminotransferase, mitochondrial (393 aa).

The transit peptide at 1 to 27 directs the protein to the mitochondrion; it reads MAAATLGQVWARKLLPVPWLLCGSKRC. Tyr169 serves as a coordination point for substrate. Residue Lys230 is modified to N6-(pyridoxal phosphate)lysine. Position 322 is an N6-acetyllysine (Lys322).

This sequence belongs to the class-IV pyridoxal-phosphate-dependent aminotransferase family. In terms of assembly, homodimer. Requires pyridoxal 5'-phosphate as cofactor.

The protein resides in the mitochondrion. It catalyses the reaction L-leucine + 2-oxoglutarate = 4-methyl-2-oxopentanoate + L-glutamate. The catalysed reaction is L-isoleucine + 2-oxoglutarate = (S)-3-methyl-2-oxopentanoate + L-glutamate. The enzyme catalyses L-valine + 2-oxoglutarate = 3-methyl-2-oxobutanoate + L-glutamate. In terms of biological role, catalyzes the first reaction in the catabolism of the essential branched chain amino acids leucine, isoleucine, and valine. May also function as a transporter of branched chain alpha-keto acids. This is Branched-chain-amino-acid aminotransferase, mitochondrial (Bcat2) from Mus musculus (Mouse).